Consider the following 262-residue polypeptide: 3-deoxy-manno-octulosonate cytidylyltransferase (262 aa).

This sequence belongs to the KdsB family.

It is found in the cytoplasm. The enzyme catalyses 3-deoxy-alpha-D-manno-oct-2-ulosonate + CTP = CMP-3-deoxy-beta-D-manno-octulosonate + diphosphate. It functions in the pathway nucleotide-sugar biosynthesis; CMP-3-deoxy-D-manno-octulosonate biosynthesis; CMP-3-deoxy-D-manno-octulosonate from 3-deoxy-D-manno-octulosonate and CTP: step 1/1. It participates in bacterial outer membrane biogenesis; lipopolysaccharide biosynthesis. Its function is as follows. Activates KDO (a required 8-carbon sugar) for incorporation into bacterial lipopolysaccharide in Gram-negative bacteria. The protein is 3-deoxy-manno-octulosonate cytidylyltransferase of Acidovorax sp. (strain JS42).